We begin with the raw amino-acid sequence, 312 residues long: Ribosomal RNA small subunit methyltransferase H (312 aa).

Residues 38–40 (GGH), D58, F84, D104, and Q111 contribute to the S-adenosyl-L-methionine site.

The protein belongs to the methyltransferase superfamily. RsmH family.

Its subcellular location is the cytoplasm. It carries out the reaction cytidine(1402) in 16S rRNA + S-adenosyl-L-methionine = N(4)-methylcytidine(1402) in 16S rRNA + S-adenosyl-L-homocysteine + H(+). Its function is as follows. Specifically methylates the N4 position of cytidine in position 1402 (C1402) of 16S rRNA. This Alcanivorax borkumensis (strain ATCC 700651 / DSM 11573 / NCIMB 13689 / SK2) protein is Ribosomal RNA small subunit methyltransferase H.